We begin with the raw amino-acid sequence, 485 residues long: Threonine synthase-like 2 (485 aa).

The residue at position 113 (Lys113) is an N6-(pyridoxal phosphate)lysine.

Belongs to the threonine synthase family. Pyridoxal 5'-phosphate serves as cofactor.

In terms of biological role, acts as a catabolic phospho-lyase on both gamma- and beta-phosphorylated substrates. Degrades O-phospho-threonine (PThr) to alpha-ketobutyrate, ammonia and phosphate. This chain is Threonine synthase-like 2 (Thnsl2), found in Rattus norvegicus (Rat).